The chain runs to 139 residues: Putative pre-16S rRNA nuclease (139 aa).

It belongs to the YqgF nuclease family.

It localises to the cytoplasm. Its function is as follows. Could be a nuclease involved in processing of the 5'-end of pre-16S rRNA. In Legionella pneumophila (strain Paris), this protein is Putative pre-16S rRNA nuclease.